We begin with the raw amino-acid sequence, 1079 residues long: DNA annealing helicase and endonuclease ZRANB3 (1079 aa).

In terms of domain architecture, Helicase ATP-binding spans 46 to 208 (IFALKRNGRC…FMQIEALFPQ (163 aa)). Residues 46–481 (IFALKRNGRC…GRKEKIQAEE (436 aa)) are DNA annealing helicase activity. An ATP-binding site is contributed by 59 to 66 (DEMGLGKT). The DEAH box signature appears at 157 to 160 (DESH). Residues 325 to 481 (AVKDYIKMML…GRKEKIQAEE (157 aa)) enclose the Helicase C-terminal domain. A PIP-box motif is present at residues 519–526 (QHDIRSFF). S569 is subject to Phosphoserine. Residues 582–601 (ASEDHCSPSEETPSQSKQIR) form a disordered region. Polar residues predominate over residues 590 to 600 (SEETPSQSKQI). Residues 621-650 (PVEGWQCSLCTYINNSELPYCEMCETPQGS) form a RanBP2-type zinc finger. Position 630 is a (Microbial infection) S-methylcysteine (C630). Residues 689-725 (LAQSEPGQLADSKEETPKIEKEDGLTSQPGNEQWKSS) form a disordered region. Residues 699–712 (DSKEETPKIEKEDG) show a composition bias toward basic and acidic residues. Residues 713–725 (LTSQPGNEQWKSS) show a composition bias toward polar residues. The region spanning 1011-1051 (PGEGHFWQVDHIKPVYGGGGQCSLDNLQTLCTVCHKERTAR) is the HNH domain. Residues 1011–1079 (PGEGHFWQVD…SDITRFLVKK (69 aa)) are endonuclease activity. An APIM motif motif is present at residues 1074-1078 (RFLVK).

Belongs to the SNF2/RAD54 helicase family. In terms of assembly, interacts (via PIP-box and RanBP2-type zinc finger) with PCNA (when PCNA is polyubiquitinated via 'Lys-63'-linked polyubiquitin). (Microbial infection) Methylation at Cys-630 by enteropathogenic E.coli protein NleE or S.flexneri protein OspZ: methylation disrupts ability to bind 'Lys-63'-linked ubiquitin.

It is found in the nucleus. The protein resides in the chromosome. Functionally, DNA annealing helicase and endonuclease required to maintain genome stability at stalled or collapsed replication forks by facilitating fork restart and limiting inappropriate recombination that could occur during template switching events. Recruited to the sites of stalled DNA replication by polyubiquitinated PCNA and acts as a structure-specific endonuclease that cleaves the replication fork D-loop intermediate, generating an accessible 3'-OH group in the template of the leading strand, which is amenable to extension by DNA polymerase. In addition to endonuclease activity, also catalyzes the fork regression via annealing helicase activity in order to prevent disintegration of the replication fork and the formation of double-strand breaks. This Homo sapiens (Human) protein is DNA annealing helicase and endonuclease ZRANB3.